A 4621-amino-acid chain; its full sequence is Dynein axonemal heavy chain 5 (4621 aa).

Residues 1–1938 (MFRIGRRQLW…MIHITDVAFI (1938 aa)) are stem. Coiled coils occupy residues 260–305 (WIKQ…DQLK) and 803–825 (LENA…DLIE). The tract at residues 901–921 (VCHENASPSGNTSGRREGHSE) is disordered. 2 coiled-coil regions span residues 1065-1094 (AVKN…SINL) and 1433-1462 (DVNI…DWQA). AAA stretches follow at residues 1939-2161 (YQNE…VLRT), 2221-2440 (TAIS…IQNL), 2547-2800 (VYPP…IWQG), and 2913-3167 (LYNE…FRRS). ATP contacts are provided by residues 1977 to 1984 (GPAGTGKT) and 2259 to 2266 (GPSGSGKT). The stalk stretch occupies residues 3182-3479 (YKFIYEEKHM…QTLLEDADRC (298 aa)). Coiled coils occupy residues 3186–3299 (YEEK…QTIK), 3423–3490 (LKAN…STLI), and 3729–3814 (ILTE…EEYR). AAA regions lie at residues 3564–3794 (LIDA…EVTQ) and 4009–4223 (ARKY…FIQN). The stretch at 4389–4417 (FLRQEIDRMQRVLSLVRSTLTELKLAVDG) forms a coiled coil.

It belongs to the dynein heavy chain family. In terms of assembly, interacts with DNAL1. Consists of at least two heavy chains and a number of intermediate and light chains. As to expression, strongly expressed in lung and kidney and weaker expression seen in brain, heart and testis. In the brain, expressed in ependymal cells lining the brain ventricles and the aqueduct.

It is found in the cytoplasm. Its subcellular location is the cytoskeleton. The protein localises to the cilium axoneme. Its function is as follows. Force generating protein of respiratory cilia. Produces force towards the minus ends of microtubules. Dynein has ATPase activity; the force-producing power stroke is thought to occur on release of ADP. Required for structural and functional integrity of the cilia of ependymal cells lining the brain ventricles. The protein is Dynein axonemal heavy chain 5 of Mus musculus (Mouse).